An 858-amino-acid chain; its full sequence is Leucine--tRNA ligase (858 aa).

Residues proline 42 to histidine 52 carry the 'HIGH' region motif. A 'KMSKS' region motif is present at residues lysine 618–serine 622. Lysine 621 contributes to the ATP binding site.

Belongs to the class-I aminoacyl-tRNA synthetase family.

The protein resides in the cytoplasm. It carries out the reaction tRNA(Leu) + L-leucine + ATP = L-leucyl-tRNA(Leu) + AMP + diphosphate. This Vibrio cholerae serotype O1 (strain ATCC 39541 / Classical Ogawa 395 / O395) protein is Leucine--tRNA ligase.